The sequence spans 134 residues: Phosphoribosyl-AMP cyclohydrolase (134 aa).

Asp-80 provides a ligand contact to Mg(2+). Cys-81 is a binding site for Zn(2+). Mg(2+)-binding residues include Asp-82 and Asp-84. The Zn(2+) site is built by Cys-98 and Cys-105.

Belongs to the PRA-CH family. In terms of assembly, homodimer. It depends on Mg(2+) as a cofactor. The cofactor is Zn(2+).

Its subcellular location is the cytoplasm. It carries out the reaction 1-(5-phospho-beta-D-ribosyl)-5'-AMP + H2O = 1-(5-phospho-beta-D-ribosyl)-5-[(5-phospho-beta-D-ribosylamino)methylideneamino]imidazole-4-carboxamide. The protein operates within amino-acid biosynthesis; L-histidine biosynthesis; L-histidine from 5-phospho-alpha-D-ribose 1-diphosphate: step 3/9. Catalyzes the hydrolysis of the adenine ring of phosphoribosyl-AMP. The polypeptide is Phosphoribosyl-AMP cyclohydrolase (Bordetella petrii (strain ATCC BAA-461 / DSM 12804 / CCUG 43448)).